Consider the following 295-residue polypeptide: Probable protein phosphatase 2C 6 (295 aa).

Residues 23-294 (QYAATHMQGW…DNMTCILIQF (272 aa)) enclose the PPM-type phosphatase domain. Mn(2+)-binding residues include aspartate 57, glycine 58, aspartate 237, and aspartate 285.

Belongs to the PP2C family. Requires Mg(2+) as cofactor. Mn(2+) serves as cofactor.

Its subcellular location is the membrane. It catalyses the reaction O-phospho-L-seryl-[protein] + H2O = L-seryl-[protein] + phosphate. The enzyme catalyses O-phospho-L-threonyl-[protein] + H2O = L-threonyl-[protein] + phosphate. Its function is as follows. Enzyme with a broad specificity. The protein is Probable protein phosphatase 2C 6 of Paramecium tetraurelia.